The chain runs to 178 residues: MSRIGKKPITIPAGIEVTVNGTLISVKKGNNVSTVETHGRVGIEVANGQVILTRNGDTKESSAFWGTYRALTANAINGLHEGFTKSLEINGVGYRATLKGDILELALGYSHPINYEIPKGLEITVEKNIVSVKGADKQQVGQAAAIIRGFRKPEPYKGKGVKYTDEKIIRKAGKTSKK.

It belongs to the universal ribosomal protein uL6 family. Part of the 50S ribosomal subunit.

This protein binds to the 23S rRNA, and is important in its secondary structure. It is located near the subunit interface in the base of the L7/L12 stalk, and near the tRNA binding site of the peptidyltransferase center. This Aliarcobacter butzleri (strain RM4018) (Arcobacter butzleri) protein is Large ribosomal subunit protein uL6.